A 275-amino-acid chain; its full sequence is 2,3,4,5-tetrahydropyridine-2,6-dicarboxylate N-succinyltransferase (275 aa).

Residues Arg106 and Asp143 each contribute to the substrate site.

Belongs to the transferase hexapeptide repeat family. As to quaternary structure, homotrimer.

The protein localises to the cytoplasm. It catalyses the reaction (S)-2,3,4,5-tetrahydrodipicolinate + succinyl-CoA + H2O = (S)-2-succinylamino-6-oxoheptanedioate + CoA. Its pathway is amino-acid biosynthesis; L-lysine biosynthesis via DAP pathway; LL-2,6-diaminopimelate from (S)-tetrahydrodipicolinate (succinylase route): step 1/3. This chain is 2,3,4,5-tetrahydropyridine-2,6-dicarboxylate N-succinyltransferase, found in Burkholderia ambifaria (strain ATCC BAA-244 / DSM 16087 / CCUG 44356 / LMG 19182 / AMMD) (Burkholderia cepacia (strain AMMD)).